Reading from the N-terminus, the 36-residue chain is U-metritoxin-Msn1a (36 aa).

Residues 4–36 (CKDKLPACGEYRGSFCKLEKVKSNCEKTCGVKC) enclose the ShKT domain. 3 cysteine pairs are disulfide-bonded: Cys-4–Cys-36, Cys-11–Cys-28, and Cys-19–Cys-32.

It belongs to the sea anemone type 1 potassium channel toxin family. Type 1b subfamily.

The protein resides in the secreted. Its subcellular location is the nematocyst. Its function is as follows. Has hemolytic activity. Inhibits voltage-gated potassium channels (Kv1/KCNA). This is U-metritoxin-Msn1a from Metridium senile (Brown sea anemone).